The primary structure comprises 393 residues: Probable N-acetyl-LL-diaminopimelate aminotransferase (393 aa).

Lys-231 is modified (N6-(pyridoxal phosphate)lysine).

This sequence belongs to the class-I pyridoxal-phosphate-dependent aminotransferase family. As to quaternary structure, homodimer. Requires pyridoxal 5'-phosphate as cofactor.

Its subcellular location is the cytoplasm. The enzyme catalyses N-acetyl-(2S,6S)-2,6-diaminopimelate + 2-oxoglutarate = L-2-acetamido-6-oxoheptanedioate + L-glutamate. It participates in amino-acid biosynthesis; L-lysine biosynthesis via DAP pathway; LL-2,6-diaminopimelate from (S)-tetrahydrodipicolinate (acetylase route): step 2/3. In terms of biological role, essential for murein biosynthesis. Probably catalyzes the conversion of L-2-acetamido-6-oxopimelate to N-acetyl-LL-2,6-diaminopimelate. The sequence is that of Probable N-acetyl-LL-diaminopimelate aminotransferase from Bacillus subtilis (strain 168).